The following is a 282-amino-acid chain: Probable septum site-determining protein MinC (282 aa).

The segment at 108-127 is disordered; the sequence is AAARSADEESANAAAAAPAA. Positions 118–127 are enriched in low complexity; sequence ANAAAAAPAA.

It belongs to the MinC family. Interacts with MinD and FtsZ.

Its function is as follows. Cell division inhibitor that blocks the formation of polar Z ring septums. Rapidly oscillates between the poles of the cell to destabilize FtsZ filaments that have formed before they mature into polar Z rings. Prevents FtsZ polymerization. This Paraburkholderia xenovorans (strain LB400) protein is Probable septum site-determining protein MinC.